A 546-amino-acid polypeptide reads, in one-letter code: Probable protein kinase UbiB (546 aa).

In terms of domain architecture, Protein kinase spans 124–502; that stretch reads DFDIKPLASA…QARQGQSRYL (379 aa). ATP contacts are provided by residues 130–138 and lysine 153; that span reads LASASIAQV. Aspartate 288 (proton acceptor) is an active-site residue. 2 helical membrane-spanning segments follow: residues 499 to 519 and 521 to 541; these read SRYLLGIGATLLISGTLLLIS and VEADMVPAGLMAAGIVTWIIG.

Belongs to the ABC1 family. UbiB subfamily.

Its subcellular location is the cell inner membrane. It functions in the pathway cofactor biosynthesis; ubiquinone biosynthesis [regulation]. In terms of biological role, is probably a protein kinase regulator of UbiI activity which is involved in aerobic coenzyme Q (ubiquinone) biosynthesis. In Pectobacterium carotovorum subsp. carotovorum (strain PC1), this protein is Probable protein kinase UbiB.